The sequence spans 622 residues: UvrABC system protein C (622 aa).

In terms of domain architecture, GIY-YIG spans 13–92 (DKPGVYLMKN…IKKYRPRYNI (80 aa)). A UVR domain is found at 204-239 (KDIIRKLKEDMDTLSENMEFEKAAELRDKIFALEKI).

It belongs to the UvrC family. Interacts with UvrB in an incision complex.

It is found in the cytoplasm. In terms of biological role, the UvrABC repair system catalyzes the recognition and processing of DNA lesions. UvrC both incises the 5' and 3' sides of the lesion. The N-terminal half is responsible for the 3' incision and the C-terminal half is responsible for the 5' incision. This chain is UvrABC system protein C, found in Clostridium kluyveri (strain ATCC 8527 / DSM 555 / NBRC 12016 / NCIMB 10680 / K1).